We begin with the raw amino-acid sequence, 204 residues long: UPF0056 membrane protein CT_852 (204 aa).

6 consecutive transmembrane segments (helical) span residues 9 to 29 (TLLFYALFNALGSLPVFIALL), 39 to 59 (HIILRESIFALLLLLLFVTFG), 66 to 86 (LGIILPAFQFTGSLLLGSIAI), 107 to 127 (IFFPLAFPVITGPAMITSTLG), 138 to 158 (IVLGAIVLAWLFSLITLLLSS), and 176 to 196 (FGISLALMAGNLMLKALSTAF).

Belongs to the UPF0056 (MarC) family.

The protein resides in the cell membrane. The chain is UPF0056 membrane protein CT_852 from Chlamydia trachomatis serovar D (strain ATCC VR-885 / DSM 19411 / UW-3/Cx).